The following is a 471-amino-acid chain: Cysteine--tRNA ligase (471 aa).

C29 contributes to the Zn(2+) binding site. The 'HIGH' region motif lies at 31–41 (PTVYDYFHIGN). C212, H237, and E241 together coordinate Zn(2+). The 'KMSKS' region motif lies at 269 to 273 (KMSKS). Residue K272 participates in ATP binding.

Belongs to the class-I aminoacyl-tRNA synthetase family. Monomer. Zn(2+) is required as a cofactor.

The protein localises to the cytoplasm. It carries out the reaction tRNA(Cys) + L-cysteine + ATP = L-cysteinyl-tRNA(Cys) + AMP + diphosphate. This chain is Cysteine--tRNA ligase, found in Symbiobacterium thermophilum (strain DSM 24528 / JCM 14929 / IAM 14863 / T).